The following is a 341-amino-acid chain: Shk1 kinase-binding protein 15 (341 aa).

WD repeat units lie at residues 33–70 (AHEGALTALAVDGIYLASTSSDETIKIFDHTRNVQIAD), 77–114 (IANACIRDMCFTKNHLLACHDNGQISMWSKGSWLLVHT), 119–157 (SHKGITGIAVHPSEKLALTVGGDGKLRLWDLVRGKGGKV), 197–234 (SSKSQLNALCLYQSKLIVGRDNGTVLVLDTSDGKILHE), and 237–274 (AHKKRVKSVYPVDDYLITASSDGSVCIWDKDWNLVIEH). The disordered stretch occupies residues 293–341 (NSEPKNVEDEAAKRQSLDSETSETSSESESESEYYSTSKQPPVKRTKHA). Basic and acidic residues predominate over residues 297-309 (KNVEDEAAKRQSL).

In terms of biological role, negatively regulates pak1/shk1 kinase activity leading to proper execution of cytoskeletal remodeling and cytokinetic functions. Its function is as follows. Interacts with pak1/shk1. The polypeptide is Shk1 kinase-binding protein 15 (skb15) (Schizosaccharomyces pombe (strain 972 / ATCC 24843) (Fission yeast)).